A 138-amino-acid chain; its full sequence is Thyrotropin subunit beta (138 aa).

Positions 1–20 (MTAIYLMSMLFGLACGQAMS) are cleaved as a signal peptide. 6 disulfide bridges follow: Cys-22–Cys-72, Cys-36–Cys-87, Cys-39–Cys-125, Cys-47–Cys-103, Cys-51–Cys-105, and Cys-108–Cys-115. The N-linked (GlcNAc...) asparagine glycan is linked to Asn-43. Positions 133-138 (VVGFSI) are excised as a propeptide.

The protein belongs to the glycoprotein hormones subunit beta family. In terms of assembly, heterodimer of a common alpha chain and a unique beta chain which confers biological specificity to thyrotropin, lutropin, follitropin and gonadotropin.

The protein resides in the secreted. Indispensable for the control of thyroid structure and metabolism. The chain is Thyrotropin subunit beta (TSHB) from Canis lupus familiaris (Dog).